Reading from the N-terminus, the 426-residue chain is Gamma-glutamyl phosphate reductase (426 aa).

The protein belongs to the gamma-glutamyl phosphate reductase family.

It is found in the cytoplasm. It carries out the reaction L-glutamate 5-semialdehyde + phosphate + NADP(+) = L-glutamyl 5-phosphate + NADPH + H(+). It functions in the pathway amino-acid biosynthesis; L-proline biosynthesis; L-glutamate 5-semialdehyde from L-glutamate: step 2/2. Its function is as follows. Catalyzes the NADPH-dependent reduction of L-glutamate 5-phosphate into L-glutamate 5-semialdehyde and phosphate. The product spontaneously undergoes cyclization to form 1-pyrroline-5-carboxylate. The chain is Gamma-glutamyl phosphate reductase from Deinococcus geothermalis (strain DSM 11300 / CIP 105573 / AG-3a).